The sequence spans 205 residues: Heat shock protein beta-11 (205 aa).

Positions 67–180 (VSPMTTFKPI…NERVIPITYT (114 aa)) constitute a sHSP domain. The segment at 184–205 (KNPALQNSEPENQAVEAEAAEN) is disordered. Positions 192 to 205 (EPENQAVEAEAAEN) are enriched in low complexity.

The protein belongs to the small heat shock protein (HSP20) family. Expressed specifically in the rostral-most somites at 24 hpf. At 48 hpf, expression continues in the rostral-most somites and also in the notochord. Somite expression was restricted to the vicinity of the horizontal myoseptum. In adults, expressed in the heart.

This is Heat shock protein beta-11 (hspb11) from Danio rerio (Zebrafish).